A 90-amino-acid chain; its full sequence is Putative sodium channel toxin Ts35 (90 aa).

Positions 1-22 are cleaved as a signal peptide; the sequence is QDEVGLGSCSVIFVVGNEEGEA. The 65-residue stretch at 23 to 87 folds into the LCN-type CS-alpha/beta domain; it reads KDGYAVGGDR…WGNPTLGPCL (65 aa). 4 disulfides stabilise this stretch: cysteine 33–cysteine 86, cysteine 37–cysteine 61, cysteine 46–cysteine 66, and cysteine 50–cysteine 68.

The protein belongs to the long (4 C-C) scorpion toxin superfamily. Sodium channel inhibitor family. As to expression, expressed by the venom gland.

The protein localises to the secreted. Putative sodium channel toxin. In Tityus serrulatus (Brazilian scorpion), this protein is Putative sodium channel toxin Ts35.